Consider the following 816-residue polypeptide: uncharacterized protein (816 aa).

4 disordered regions span residues 1–34 (MLFNINRQEDDPFTQLINQSSANTQNQQAHQQES), 65–101 (RQNNRAYGEDAKNRKFPTVSATSAYSKQQPKDLGYKN), 154–406 (DEKD…ENPE), and 770–816 (RQHK…VMYA). Positions 18 to 32 (NQSSANTQNQQAHQQ) are enriched in low complexity. Residues 83–92 (VSATSAYSKQ) show a composition bias toward polar residues. Positions 161–223 (TTTSSSTSTS…STSTTSTSTT (63 aa)) are enriched in low complexity. Residues 246–260 (ESTSIGKGTADSAQI) are compositionally biased toward polar residues. Serine 286 is modified (phosphoserine). The span at 292–316 (DEQKEEKSDVKKVNPPSGEEKKEVE) shows a compositional bias: basic and acidic residues. Acidic residues predominate over residues 317–326 (AEGDAEEETE). Over residues 327 to 342 (QSSAEESAERTSTPET) the composition is skewed to low complexity. Phosphoserine is present on residues serine 343 and serine 347. A compositionally biased stretch (acidic residues) spans 343 to 353 (SEPESEEDESP). Over residues 380 to 396 (KSPTSSSTQKSKTAAPS) the composition is skewed to low complexity. Composition is skewed to basic and acidic residues over residues 770-792 (RQHKQAEGIHAAENHKIPNDRSQ) and 799-816 (PKDDSLYEYHTEEDVMYA). Threonine 809 is modified (phosphothreonine).

Pyrophosphorylated by 5-diphosphoinositol pentakisphosphate (5-IP7). Serine pyrophosphorylation is achieved by Mg(2+)-dependent, but enzyme independent transfer of a beta-phosphate from a inositol pyrophosphate to a pre-phosphorylated serine residue.

This is an uncharacterized protein from Saccharomyces cerevisiae (strain ATCC 204508 / S288c) (Baker's yeast).